Consider the following 52-residue polypeptide: MARYRCCRSRSLSRSRCYRQRPRCRRRRRRSCRRPRASRCCRRRYRLRRRRY.

The protein belongs to the protamine P1 family. As to quaternary structure, cross-linked by interchain disulfide bonds around the DNA-helix. As to expression, testis.

It is found in the nucleus. The protein localises to the chromosome. Protamines substitute for histones in the chromatin of sperm during the haploid phase of spermatogenesis. They compact sperm DNA into a highly condensed, stable and inactive complex. The protein is Sperm protamine P1 (PRM1) of Alouatta seniculus (Red howler monkey).